We begin with the raw amino-acid sequence, 22 residues long: Antimicrobial peptide 4 (22 aa).

As to expression, expressed by the skin glands.

Its subcellular location is the secreted. Functionally, has very strong antimicrobial activity against Gram-positive bacterium S.aureus and yeast C.albicans, and very weak activity against Gram-negative bacterium E.coli. Has strong hemolytic activity against human red blood cells. This is Antimicrobial peptide 4 from Xenopus tropicalis (Western clawed frog).